A 413-amino-acid chain; its full sequence is MKYEKLLPRFLEYVKVNTRSDENSTTTPSTQALVEFAHKMGEDMKALGLKDVHYLESNGYVIGTIPANTDKKVRKIGLLAHLDTADFNAEGVNPQILENYDGESVIQLGDTEFTLDPKDFPNLKNYKGQTLVHTDGTTLLGSDDKSGVAEIMTLADYLLNINPDFEHGEIRVGFGPDEEIGVGADKFDVADFDVDFAYTVDGGPLGELQYETFSAAGAVIEFQGKNVHPGTAKNMMVNALQLAIDYHNALPEFDRPEKTEGREGFFHLLKLDGTPEEARAQYIIRDHEEGKFNERKALMQEIADKMNAELGQNRVKPLIKDQYYNMAQIIEKDMSIIDIAKKAMENLDIAPIIEPIRGGTDGSKISFMGLPTPNLFAGGENMHGRFEFVSVQTMEKAVDTLLEIIRLNNEVAK.

H81 contacts Zn(2+). D83 is an active-site residue. D143 serves as a coordination point for Zn(2+). E178 serves as the catalytic Proton acceptor. Residues E179, D201, and H383 each contribute to the Zn(2+) site.

This sequence belongs to the peptidase M20B family. As to quaternary structure, homodimer. It depends on Zn(2+) as a cofactor.

The protein resides in the cytoplasm. The catalysed reaction is Release of the N-terminal residue from a tripeptide.. With respect to regulation, inhibited by EDTA, by the reducing agents dithiothreitol and 13-mercaptoethanol, and by the divalent cation Cu(2+). In terms of biological role, cleaves the N-terminal amino acid of tripeptides. Has a broad specificity for tripeptides with no clear preference for a particular tripeptide. Tripeptides with proline in the second position are an exception and are not hydrolyzed. Does not hydrolyze dipeptides, tetrapeptides, or oligopeptides. The protein is Peptidase T (pepT) of Lactococcus lactis subsp. cremoris (Streptococcus cremoris).